A 259-amino-acid polypeptide reads, in one-letter code: DNA-directed RNA polymerase subunit Rpo3 (259 aa).

It belongs to the archaeal Rpo3/eukaryotic RPB3 RNA polymerase subunit family. As to quaternary structure, part of the RNA polymerase complex.

Its subcellular location is the cytoplasm. The enzyme catalyses RNA(n) + a ribonucleoside 5'-triphosphate = RNA(n+1) + diphosphate. Its function is as follows. DNA-dependent RNA polymerase (RNAP) catalyzes the transcription of DNA into RNA using the four ribonucleoside triphosphates as substrates. In Thermococcus kodakarensis (strain ATCC BAA-918 / JCM 12380 / KOD1) (Pyrococcus kodakaraensis (strain KOD1)), this protein is DNA-directed RNA polymerase subunit Rpo3.